The primary structure comprises 541 residues: Glutamyl-tRNA(Gln) amidotransferase subunit B, mitochondrial (541 aa).

This sequence belongs to the GatB/GatE family. GatB subfamily. As to quaternary structure, subunit of the heterotrimeric GatFAB amidotransferase (AdT) complex, composed of A (HER2), B (PET112) and F (YGR102C) subunits.

The protein localises to the mitochondrion. It carries out the reaction L-glutamyl-tRNA(Gln) + L-glutamine + ATP + H2O = L-glutaminyl-tRNA(Gln) + L-glutamate + ADP + phosphate + H(+). In terms of biological role, allows the formation of correctly charged Gln-tRNA(Gln) through the transamidation of misacylated Glu-tRNA(Gln) in the mitochondria. The reaction takes place in the presence of glutamine and ATP through an activated gamma-phospho-Glu-tRNA(Gln). The chain is Glutamyl-tRNA(Gln) amidotransferase subunit B, mitochondrial from Saccharomyces cerevisiae (strain ATCC 204508 / S288c) (Baker's yeast).